Consider the following 103-residue polypeptide: Large ribosomal subunit protein eL14 (103 aa).

This sequence belongs to the eukaryotic ribosomal protein eL14 family.

The protein is Large ribosomal subunit protein eL14 of Pyrobaculum arsenaticum (strain DSM 13514 / JCM 11321 / PZ6).